Here is a 103-residue protein sequence, read N- to C-terminus: MFELDILGKDGRIKLLNNAETYELYQYSNKNNSAGNDYKSLILTCREDNDYQSERMIKAIKNIIHCMTNNHQPISSAETSLETIKIIHGIINSVKIGNDPNNI.

This is an uncharacterized protein from Haemophilus influenzae (strain ATCC 51907 / DSM 11121 / KW20 / Rd).